Reading from the N-terminus, the 726-residue chain is Sensory/regulatory protein RpfC (726 aa).

A run of 5 helical transmembrane segments spans residues 23–40 (NLIR…LGWR), 52–72 (TWLI…AILL), 95–115 (IMAI…WVTI), 128–148 (AATA…PYWK), and 152–172 (YLSW…DSLL). In terms of domain architecture, Histidine kinase spans 195–417 (NMSHEFRTPL…VFWFELPMAI (223 aa)). At His-198 the chain carries Phosphohistidine; by autocatalysis. In terms of domain architecture, Response regulatory spans 463–581 (RMLVADDHEA…KLLDTLADLA (119 aa)). At Asp-512 the chain carries 4-aspartylphosphate. The HPt domain maps to 618-711 (GEEFERQFVR…KAGKDALDAR (94 aa)). His-657 bears the Phosphohistidine mark.

As to quaternary structure, at low DSF concentrations, interacts with RpfF. Autophosphorylated. Activation may require a sequential transfer of a phosphate group from a His in the primary transmitter domain, to an Asp in the receiver domain and to a His in the secondary transmitter domain.

The protein localises to the cell inner membrane. The catalysed reaction is ATP + protein L-histidine = ADP + protein N-phospho-L-histidine.. With respect to regulation, binding of DSF to the sensor region causes allosteric change, which facilitates RpfC autophosphorylation. In terms of biological role, hybrid sensor kinase that regulates diverse biological functions through two distinct molecular mechanisms. At low cell density, the extracellular concentration of the diffusible signaling factor (DSF) is below a threshold, and unphosphorylated RpfC is involved in the negative regulation of DSF synthesis, via direct interaction with the DSF synthase RpfF. Interaction prevents synthesis of DSF, which remains at a basal level. This activity does not involve the phosphorelay mechanism and is not dependent on RpfG. Is also member of the two-component regulatory system RpfG/RpfC, which is involved in the perception and response to DSF, which is essential for cell-cell signaling. At high cell density, the level of extracellular DSF increases and binding of DSF to the sensor region of RpfC causes autophosphorylation of RpfC, which results in the release of RpfF and the activation of RpfG via a four-step phosphorelay. Activation of RpfG leads to the positive regulation of biofilm dispersal and the production of virulence factors. This chain is Sensory/regulatory protein RpfC (rpfC), found in Xanthomonas campestris pv. campestris (strain ATCC 33913 / DSM 3586 / NCPPB 528 / LMG 568 / P 25).